Consider the following 255-residue polypeptide: Zinc D-Ala-D-Ala carboxypeptidase (255 aa).

The N-terminal stretch at 1 to 42 (MRPRPIRLLLTALVGAGLAFAPVSAVAAPTATASASADVGAL) is a signal peptide. Blocked amino end (Asp) is present on Asp-43. Disulfide bonds link Cys-45–Cys-123 and Cys-136–Cys-184. Arg-180 is a binding site for substrate. Residue His-196 coordinates Zn(2+). Cysteines 212 and 253 form a disulfide. His-234 acts as the Proton donor in catalysis. Residues His-237 and His-239 each coordinate Zn(2+).

It belongs to the peptidase M15 family. Requires Zn(2+) as cofactor. The N-terminus is partially blocked as a result of the cyclization of the first two amino acids into anhydroaspartylglycine imide.

Its subcellular location is the secreted. It catalyses the reaction Cleavage of the bond: (Ac)2-L-lysyl-D-alanyl-|-D-alanine.. Functionally, this enzyme catalyzes carboxypeptidation and transpeptidation reactions involved in bacterial cell wall metabolism. It effectively catalyzes the transfer of the N-alpha, N-epsilon-diacetyl-L-lysyl-D-alanyl electrophilic group of the standard tripeptide substrate N-alpha,N-epsilon-diacetyl-L-lysyl-D-alanyl-D-alanine to water. It also performs a weak beta-lactamase activity, hydrolyzing penicillin into penicilloate at a very low rate. This Streptomyces albus G protein is Zinc D-Ala-D-Ala carboxypeptidase.